A 343-amino-acid chain; its full sequence is Mitochondrial amidoxime-reducing component 1 (343 aa).

Residues 1 to 25 (MSNTVFSGAVGPLRAAALSISRHRL) lie on the Mitochondrial matrix side of the membrane. Residues 26 to 44 (PLLCAAGLGLTAVASWMWW) form a helical; Signal-anchor for type II membrane protein membrane-spanning segment. Residues 45 to 343 (RKRQGEAEDL…DPVYRVTRKG (299 aa)) are Cytoplasmic-facing. Mo-molybdopterin is bound by residues Lys69, Ser70, and Arg94. Residues 95–186 (HWLVVTEEGN…SSQPYRLVHF (92 aa)) form an MOSC N-terminal region region. In terms of domain architecture, MOSC spans 181–339 (YRLVHFEADV…IRVGDPVYRV (159 aa)). Mo-molybdopterin contacts are provided by Ser215, Arg242, Arg276, Cys277, and Tyr321.

Requires Mo-molybdopterin as cofactor.

Its subcellular location is the mitochondrion outer membrane. The protein localises to the membrane. It carries out the reaction N(omega)-hydroxy-L-arginine + 2 Fe(II)-[cytochrome b5] + 2 H(+) = L-arginine + 2 Fe(III)-[cytochrome b5] + H2O. Its function is as follows. Catalyzes the reduction of N-oxygenated molecules, acting as a counterpart of cytochrome P450 and flavin-containing monooxygenases in metabolic cycles. As a component of prodrug-converting system, reduces a multitude of N-hydroxylated prodrugs particularly amidoximes, leading to increased drug bioavailability. May be involved in mitochondrial N(omega)-hydroxy-L-arginine (NOHA) reduction, regulating endogenous nitric oxide levels and biosynthesis. Postulated to cleave the N-OH bond of N-hydroxylated substrates in concert with electron transfer from NADH to cytochrome b5 reductase then to cytochrome b5, the ultimate electron donor that primes the active site for substrate reduction. The chain is Mitochondrial amidoxime-reducing component 1 (mtarc1) from Xenopus laevis (African clawed frog).